Here is a 212-residue protein sequence, read N- to C-terminus: NAD(P)H-hydrate epimerase (212 aa).

One can recognise a YjeF N-terminal domain in the interval Met10–Leu212. Residue Asn65–Asp69 participates in (6S)-NADPHX binding. 2 residues coordinate K(+): Asn66 and Asp129. Residues Gly133–Pro139 and Asp161 contribute to the (6S)-NADPHX site. Ser164 contacts K(+).

Belongs to the NnrE/AIBP family. K(+) serves as cofactor.

The enzyme catalyses (6R)-NADHX = (6S)-NADHX. It catalyses the reaction (6R)-NADPHX = (6S)-NADPHX. In terms of biological role, catalyzes the epimerization of the S- and R-forms of NAD(P)HX, a damaged form of NAD(P)H that is a result of enzymatic or heat-dependent hydration. This is a prerequisite for the S-specific NAD(P)H-hydrate dehydratase to allow the repair of both epimers of NAD(P)HX. The chain is NAD(P)H-hydrate epimerase from Rhodobacter capsulatus (strain ATCC BAA-309 / NBRC 16581 / SB1003).